The chain runs to 415 residues: MRVSLFLQKQIIECSKAFQPHSTRLQWPKSQDKVFVAMSGGVDSSFSAYLLKSQGYNVEGVFMRNWLDEDSAPSGCPAERDWATVQKVCKKLNISCRRFNFEKEYWNLVFEPSLDLYENGLTPNPDVSCNRQVKFGALFDALKKHCENNVKGDWWLASGHYAKSVVNIETNESHMCIPTDKRKDQTLFLCTIRKEALEKTIFPLHNWTKENVKKQASSAGFKEIAEKQESQGLCFVSPNVGRKFRKFLQRYLNFSDRPIKVIAGKNVVGEFSGNHGIWSLTVGERCGLSLPQAQSEYFGRWYVWKKDIKNNALYICRGTNNELLMSKCIYLKDWKWCGTKLQNLEKSALSCFVRVRHQQPLQPAKVTWRNPESVKIHFQDKQRAVTPGQVIAVYVNDVCLGGGMVDTVEPEKDFD.

ATP-binding positions include 37–44 (AMSGGVDS) and Met-63. Residues 124-126 (NPD) are interaction with target base in tRNA. Catalysis depends on Cys-129, which acts as the Nucleophile. A disulfide bond links Cys-129 and Cys-234. Residue Gly-159 coordinates ATP. The segment at 183 to 185 (KDQ) is interaction with tRNA. Cys-234 acts as the Cysteine persulfide intermediate in catalysis. An interaction with tRNA region spans residues 356 to 357 (RH).

The protein belongs to the MnmA/TRMU family.

The protein resides in the mitochondrion. It carries out the reaction 5-taurinomethyluridine(34) in tRNA + S-sulfanyl-L-cysteinyl-[protein] + AH2 + ATP = 5-taurinomethyl-2-thiouridine(34) in tRNA + L-cysteinyl-[protein] + A + AMP + diphosphate + H(+). In terms of biological role, catalyzes the 2-thiolation of uridine at the wobble position (U34) of mitochondrial tRNA(Lys), tRNA(Glu) and tRNA(Gln). Required for the formation of 5-taurinomethyl-2-thiouridine (tm5s2U) of mitochondrial tRNA(Lys), tRNA(Glu), and tRNA(Gln) at the wobble position. ATP is required to activate the C2 atom of the wobble base. The polypeptide is Mitochondrial tRNA-specific 2-thiouridylase 1 (Schizosaccharomyces pombe (strain 972 / ATCC 24843) (Fission yeast)).